The chain runs to 255 residues: NAD kinase (255 aa).

Asp-44 (proton acceptor) is an active-site residue. NAD(+)-binding positions include 44-45, His-49, 114-115, Asp-144, Ala-152, 155-160, and Gln-216; these read DG, NE, and SAYNLS.

The protein belongs to the NAD kinase family. A divalent metal cation serves as cofactor.

Its subcellular location is the cytoplasm. The enzyme catalyses NAD(+) + ATP = ADP + NADP(+) + H(+). In terms of biological role, involved in the regulation of the intracellular balance of NAD and NADP, and is a key enzyme in the biosynthesis of NADP. Catalyzes specifically the phosphorylation on 2'-hydroxyl of the adenosine moiety of NAD to yield NADP. This chain is NAD kinase, found in Rickettsia peacockii (strain Rustic).